The chain runs to 343 residues: Dihydroorotase (343 aa).

Positions 14 and 16 each coordinate Zn(2+). Substrate-binding positions include 16-18 (HLR) and Asn-42. Zn(2+)-binding residues include Lys-100, His-137, and His-175. Lys-100 carries the post-translational modification N6-carboxylysine. His-137 is a binding site for substrate. Leu-220 is a binding site for substrate. A Zn(2+)-binding site is contributed by Asp-248. The active site involves Asp-248. Substrate-binding residues include His-252 and Ala-264.

This sequence belongs to the metallo-dependent hydrolases superfamily. DHOase family. Class II DHOase subfamily. As to quaternary structure, homodimer. Zn(2+) is required as a cofactor.

It catalyses the reaction (S)-dihydroorotate + H2O = N-carbamoyl-L-aspartate + H(+). The protein operates within pyrimidine metabolism; UMP biosynthesis via de novo pathway; (S)-dihydroorotate from bicarbonate: step 3/3. Catalyzes the reversible cyclization of carbamoyl aspartate to dihydroorotate. The polypeptide is Dihydroorotase (Synechococcus sp. (strain CC9902)).